A 1093-amino-acid polypeptide reads, in one-letter code: Receptor-mediated endocytosis protein 6 (1093 aa).

Residues 156-389 (LKIAQVVCNL…EMMDALLVEK (234 aa)) enclose the Ras-GAP domain. Disordered stretches follow at residues 547 to 610 (DLEK…GGEQ) and 643 to 669 (RSGSFVKPPPSGIPTSSSEQNLPDVAT). 2 stretches are compositionally biased toward polar residues: residues 568-577 (IDFSSGSAET) and 584-598 (DSTSVSPEPLTSTEE). The VPS9 domain occupies 955-1093 (HHRDKLLRGT…SAVEYIKTIL (139 aa)).

This sequence belongs to the GAPVD1 family. As to quaternary structure, interacts with GDP-bound rab-5. Interacts with alpha-adaptin.

The protein resides in the membrane. It localises to the cytoplasmic vesicle. It is found in the clathrin-coated vesicle. Its function is as follows. Acts both as a GTPase-activating protein (GAP) and a guanine nucleotide exchange factor (GEF), and participates in endocytosis. Acts by regulating the activation of rab-5 by exchanging bound GDP for free GTP at clathrin coated pits. The polypeptide is Receptor-mediated endocytosis protein 6 (rme-6) (Caenorhabditis elegans).